The primary structure comprises 328 residues: Ribosomal protein L11 methyltransferase (328 aa).

S-adenosyl-L-methionine contacts are provided by threonine 153, glycine 174, aspartate 196, and asparagine 263.

The protein belongs to the methyltransferase superfamily. PrmA family.

The protein resides in the cytoplasm. The enzyme catalyses L-lysyl-[protein] + 3 S-adenosyl-L-methionine = N(6),N(6),N(6)-trimethyl-L-lysyl-[protein] + 3 S-adenosyl-L-homocysteine + 3 H(+). Functionally, methylates ribosomal protein L11. The sequence is that of Ribosomal protein L11 methyltransferase from Chloroflexus aurantiacus (strain ATCC 29366 / DSM 635 / J-10-fl).